The following is a 231-amino-acid chain: Protein RhiA (231 aa).

In terms of biological role, may be involved in plant-microbe interaction. This is Protein RhiA (rhiA) from Rhizobium leguminosarum bv. viciae.